The following is a 241-amino-acid chain: MLIEHERGFVLHARAWRETSLLVEVLTEQHGRVGLLARGVHGPRKQALRAALQPLQLIQFTAVQRGELAQLRQAEAIDTAPRLLGEAMLAGFYISELLLRLAPRHAPVPELFDCYAQARAHLASGAALAWGLRQFERDVLDGLGFGFDLQHDSDGQPIDPAARYRLDPQDGARRVLSERLAQDRRETVTGAALLALGEDRVPATEDMPGLRRSMRGVLLHHLSGRGLKSWEMLEELARRGA.

This sequence belongs to the RecO family.

In terms of biological role, involved in DNA repair and RecF pathway recombination. In Xanthomonas campestris pv. campestris (strain B100), this protein is DNA repair protein RecO.